The primary structure comprises 536 residues: DEAD-box ATP-dependent RNA helicase 26 (536 aa).

Residues 1–44 are disordered; sequence MMSGGPSDATHRKRRRRRGPKGSGVDGPSIPRAVTTNGAGPEEE. Residues 11-20 are compositionally biased toward basic residues; that stretch reads HRKRRRRRGP. The short motif at 74 to 102 is the Q motif element; that stretch reads TRFDQCPVSPLSLKAIKDAGYEKMTQVQE. The region spanning 105–282 is the Helicase ATP-binding domain; it reads LPIILQGEDV…HIAMKRGYKF (178 aa). 118 to 125 contributes to the ATP binding site; it reads AKTGTGKT. Residues 230 to 233 carry the DEAD box motif; the sequence is DEAD. One can recognise a Helicase C-terminal domain in the interval 316–466; sequence VLKKHIAEDA…SIQTGVKDAL (151 aa).

This sequence belongs to the DEAD box helicase family.

The catalysed reaction is ATP + H2O = ADP + phosphate + H(+). This chain is DEAD-box ATP-dependent RNA helicase 26, found in Oryza sativa subsp. japonica (Rice).